Consider the following 874-residue polypeptide: Alanine--tRNA ligase (874 aa).

Zn(2+) contacts are provided by His-562, His-566, Cys-663, and His-667.

Belongs to the class-II aminoacyl-tRNA synthetase family. Zn(2+) serves as cofactor.

It localises to the cytoplasm. It catalyses the reaction tRNA(Ala) + L-alanine + ATP = L-alanyl-tRNA(Ala) + AMP + diphosphate. In terms of biological role, catalyzes the attachment of alanine to tRNA(Ala) in a two-step reaction: alanine is first activated by ATP to form Ala-AMP and then transferred to the acceptor end of tRNA(Ala). Also edits incorrectly charged Ser-tRNA(Ala) and Gly-tRNA(Ala) via its editing domain. In Bordetella bronchiseptica (strain ATCC BAA-588 / NCTC 13252 / RB50) (Alcaligenes bronchisepticus), this protein is Alanine--tRNA ligase.